We begin with the raw amino-acid sequence, 218 residues long: uncharacterized protein (218 aa).

A run of 4 helical transmembrane segments spans residues 10 to 30, 55 to 75, 147 to 167, and 175 to 195; these read IPPL…SLGI, IGVG…GYSI, VTGG…AGMA, and FSWI…ILLR.

Belongs to the DedA family.

The protein resides in the cell membrane. This is an uncharacterized protein from Mycobacterium tuberculosis (strain CDC 1551 / Oshkosh).